The chain runs to 160 residues: Transcriptional repressor NrdR (160 aa).

A zinc finger lies at 3 to 34 (CPFCGHADTQVVDSRVSEEGDTIRRRRRCLSC). One can recognise an ATP-cone domain in the interval 49 to 139 (PTVVKRDGSR…VYKSFEDIGE (91 aa)).

It belongs to the NrdR family. It depends on Zn(2+) as a cofactor.

Functionally, negatively regulates transcription of bacterial ribonucleotide reductase nrd genes and operons by binding to NrdR-boxes. This chain is Transcriptional repressor NrdR, found in Bordetella avium (strain 197N).